The primary structure comprises 107 residues: Integration host factor subunit beta (107 aa).

The disordered stretch occupies residues Arg-56 to Arg-107. Residues Pro-82–Asp-101 are compositionally biased toward basic and acidic residues.

This sequence belongs to the bacterial histone-like protein family. As to quaternary structure, heterodimer of an alpha and a beta chain.

In terms of biological role, this protein is one of the two subunits of integration host factor, a specific DNA-binding protein that functions in genetic recombination as well as in transcriptional and translational control. In Burkholderia vietnamiensis (strain G4 / LMG 22486) (Burkholderia cepacia (strain R1808)), this protein is Integration host factor subunit beta.